Here is a 252-residue protein sequence, read N- to C-terminus: Insulin-induced gene 1 protein (252 aa).

Residues 1–59 (MPRLESGAWSCSCAARARHAARPGEAAPKADAMQSPSPSAGRAEREASGGSATTWRQHL) are Cytoplasmic-facing. Positions 22–48 (RPGEAAPKADAMQSPSPSAGRAEREAS) are disordered. A helical membrane pass occupies residues 60-82 (VQRSVVLFVVGAFMALVLNLLQI). The Extracellular portion of the chain corresponds to 83-101 (QRNVTLFPDEVIATLFSSA). Residues 102–119 (WWVPPCCGTAAAVVGLLY) traverse the membrane as a helical segment. Residues 120-134 (PCIDSHLGEPHKFKR) are Cytoplasmic-facing. The chain crosses the membrane as a helical span at residues 135-157 (EWASVMRCIAVFVGINHASAKLD). The Extracellular segment spans residues 158–160 (FAN). Residues 161–179 (NVQLSLTLAALSLGLWWTF) form a helical membrane-spanning segment. Residues 180–184 (DRSRS) lie on the Cytoplasmic side of the membrane. A helical transmembrane segment spans residues 185-206 (GLGLGITIAFVATLITQFLVYN). The Extracellular segment spans residues 207–220 (GVYQYTSPDFLYIR). A helical transmembrane segment spans residues 221 to 238 (SWLPCIFFSGGVTVGNIG). Residues 239-252 (RQLAMGIPEKPHND) are Cytoplasmic-facing. The short motif at 246–252 (PEKPHND) is the KxHxx element.

It belongs to the INSIG family. As to quaternary structure, interacts with SCAP; interaction is direct and only takes place in the presence of sterols; it prevents interaction between SCAP and the coat protein complex II (COPII). Associates with the SCAP-SREBP complex; association is mediated via its interaction with SCAP and only takes place in the presence of sterols.

It is found in the endoplasmic reticulum membrane. Oxysterol-binding protein that mediates feedback control of cholesterol synthesis by controlling both endoplasmic reticulum to Golgi transport of SCAP and degradation of HMGCR. Acts as a negative regulator of cholesterol biosynthesis by mediating the retention of the SCAP-SREBP complex in the endoplasmic reticulum, thereby blocking the processing of sterol regulatory element-binding proteins (SREBPs). Binds oxysterol, including 25-hydroxycholesterol, regulating interaction with SCAP and retention of the SCAP-SREBP complex in the endoplasmic reticulum. In presence of oxysterol, interacts with SCAP, retaining the SCAP-SREBP complex in the endoplasmic reticulum, thereby preventing SCAP from escorting SREBPs to the Golgi. Sterol deprivation reduces oxysterol-binding, disrupting the interaction between INSIG1 and SCAP, thereby promoting Golgi transport of the SCAP-SREBP complex, followed by processing and nuclear translocation of SREBPs. Also regulates cholesterol synthesis by regulating degradation of HMGCR. The sequence is that of Insulin-induced gene 1 protein from Gallus gallus (Chicken).